Reading from the N-terminus, the 575-residue chain is Proline--tRNA ligase (575 aa).

Belongs to the class-II aminoacyl-tRNA synthetase family. ProS type 1 subfamily. In terms of assembly, homodimer.

It is found in the cytoplasm. The enzyme catalyses tRNA(Pro) + L-proline + ATP = L-prolyl-tRNA(Pro) + AMP + diphosphate. Catalyzes the attachment of proline to tRNA(Pro) in a two-step reaction: proline is first activated by ATP to form Pro-AMP and then transferred to the acceptor end of tRNA(Pro). As ProRS can inadvertently accommodate and process non-cognate amino acids such as alanine and cysteine, to avoid such errors it has two additional distinct editing activities against alanine. One activity is designated as 'pretransfer' editing and involves the tRNA(Pro)-independent hydrolysis of activated Ala-AMP. The other activity is designated 'posttransfer' editing and involves deacylation of mischarged Ala-tRNA(Pro). The misacylated Cys-tRNA(Pro) is not edited by ProRS. The sequence is that of Proline--tRNA ligase from Pseudothermotoga lettingae (strain ATCC BAA-301 / DSM 14385 / NBRC 107922 / TMO) (Thermotoga lettingae).